We begin with the raw amino-acid sequence, 196 residues long: Lipoprotein signal peptidase (196 aa).

The disordered stretch occupies residues 1 to 24 (MAEAERIIGMPENPDVDGTDEGGS). A run of 3 helical transmembrane segments spans residues 40 to 60 (ILAL…SKML), 92 to 112 (IGEA…VVIF), and 118 to 138 (LYSL…LGNL). Residues D155 and D169 contribute to the active site. A helical membrane pass occupies residues 164 to 184 (VFNLADSAIVCGGILIVILSF).

The protein belongs to the peptidase A8 family.

Its subcellular location is the cell membrane. The catalysed reaction is Release of signal peptides from bacterial membrane prolipoproteins. Hydrolyzes -Xaa-Yaa-Zaa-|-(S,diacylglyceryl)Cys-, in which Xaa is hydrophobic (preferably Leu), and Yaa (Ala or Ser) and Zaa (Gly or Ala) have small, neutral side chains.. It functions in the pathway protein modification; lipoprotein biosynthesis (signal peptide cleavage). Functionally, this protein specifically catalyzes the removal of signal peptides from prolipoproteins. In Streptomyces griseus subsp. griseus (strain JCM 4626 / CBS 651.72 / NBRC 13350 / KCC S-0626 / ISP 5235), this protein is Lipoprotein signal peptidase.